A 252-amino-acid polypeptide reads, in one-letter code: Imidazole glycerol phosphate synthase subunit HisF (252 aa).

Residues Asp11 and Asp130 contribute to the active site.

The protein belongs to the HisA/HisF family. As to quaternary structure, heterodimer of HisH and HisF.

It localises to the cytoplasm. The catalysed reaction is 5-[(5-phospho-1-deoxy-D-ribulos-1-ylimino)methylamino]-1-(5-phospho-beta-D-ribosyl)imidazole-4-carboxamide + L-glutamine = D-erythro-1-(imidazol-4-yl)glycerol 3-phosphate + 5-amino-1-(5-phospho-beta-D-ribosyl)imidazole-4-carboxamide + L-glutamate + H(+). It participates in amino-acid biosynthesis; L-histidine biosynthesis; L-histidine from 5-phospho-alpha-D-ribose 1-diphosphate: step 5/9. Its function is as follows. IGPS catalyzes the conversion of PRFAR and glutamine to IGP, AICAR and glutamate. The HisF subunit catalyzes the cyclization activity that produces IGP and AICAR from PRFAR using the ammonia provided by the HisH subunit. This Polynucleobacter asymbioticus (strain DSM 18221 / CIP 109841 / QLW-P1DMWA-1) (Polynucleobacter necessarius subsp. asymbioticus) protein is Imidazole glycerol phosphate synthase subunit HisF.